Reading from the N-terminus, the 285-residue chain is Ubiquinone biosynthesis protein COQ4, mitochondrial (285 aa).

A mitochondrion-targeting transit peptide spans 1-11 (MPPTVRQGIRT). Zn(2+) is bound by residues His-166, Asp-167, His-170, and Glu-182.

The protein belongs to the COQ4 family. Component of a multi-subunit COQ enzyme complex, composed of at least COQ3, COQ4, COQ5, COQ6, COQ7 and COQ9. It depends on Zn(2+) as a cofactor.

Its subcellular location is the mitochondrion inner membrane. The enzyme catalyses a 4-hydroxy-3-methoxy-5-(all-trans-polyprenyl)benzoate + H(+) = a 2-methoxy-6-(all-trans-polyprenyl)phenol + CO2. It participates in cofactor biosynthesis; ubiquinone biosynthesis. In terms of biological role, lyase that catalyzes the C1-decarboxylation of 4-hydroxy-3-methoxy-5-(all-trans-polyprenyl)benzoic acid into 2-methoxy-6-(all-trans-polyprenyl)phenol during ubiquinone biosynthesis. The protein is Ubiquinone biosynthesis protein COQ4, mitochondrial of Paracoccidioides brasiliensis (strain Pb18).